Here is a 780-residue protein sequence, read N- to C-terminus: Carboxysome assembly protein CsoS2 (780 aa).

The segment covering 1–15 has biased composition (basic and acidic residues); the sequence is MARLSSRELALERRK. 5 disordered regions span residues 1–173, 189–212, 226–281, 330–349, and 382–444; these read MARL…RAIE, KHGK…NPDL, TKAG…NRSV, NRVT…DEPG, and SLTQ…TGVT. The stretch at 5–24 is one N-repeat 1 repeat; it reads SSRELALERRKALTTSGKKS. Residues 48 to 78 show a composition bias toward low complexity; sequence AAAAVEPTAPAVSAPVKPTVSFTPASPSSSS. The stretch at 86–105 is one N-repeat 2 repeat; the sequence is PSRDLVLARRDALSRRGKTA. Over residues 86 to 116 the composition is skewed to basic and acidic residues; that stretch reads PSRDLVLARRDALSRRGKTADTSRDRNRADV. Low complexity predominate over residues 117 to 130; sequence ARQTQAAAPVAASA. N-repeat repeat units lie at residues 175-194 and 213-235; these read PSRA…GKTA and TSRE…NKQS. M-repeat repeat units follow at residues 260–309, 320–369, 378–417, 431–480, 490–535, and 541–599; these read KVGE…QTFC, KVRV…AAYC, KVGH…GDQY, KVGQ…NAFC, KVGF…LENA, and TSAV…ATAC. Positions 260–608 are middle region; sequence KVGESTTSTG…CGNEAPAGTD (349 aa). Residues 264–276 show a composition bias toward low complexity; it reads STTSTGQTVTGTQ. Low complexity-rich tracts occupy residues 387 to 403 and 432 to 444; these read GRPV…SVTG and VGQS…TGVT. A C-terminal domain region spans residues 609-749; the sequence is SHGQAPEGAA…ATVPHERKRN (141 aa). C-repeat repeat units follow at residues 623-669 and 693-726; these read SVMS…TEQF and EQPA…EGVS. Disordered stretches follow at residues 631–661 and 686–780; these read AQQQ…LAGG and AVVS…GARG. Positions 641 to 651 are enriched in polar residues; sequence VTGTSYEQGNR. The span at 709–720 shows a compositional bias: basic and acidic residues; sequence TGDDWDRGEHVT. The segment at 750–780 is C-terminal peptide; that stretch reads EENEWPVSRVTGSSGNTEKGSLITVSGGARG. Polar residues predominate over residues 759 to 768; it reads VTGSSGNTEK.

This sequence belongs to the CsoS2 family. In terms of assembly, interacts via its N-terminal repeats with RuBisCO. Interacts with the major shell protein CsoS1. Unlike H.neapolitanus and predictions for P.marinus strain MIT 9313, this protein is not thought to have ribosomal frameshifting.

Required for alpha-carboxysome (Cb) assembly, mediates interaction between RuBisCO and the carboxysome shell. The protein is probably intrinsically disordered. The C-terminal repeats act as the encapsulation signal to target proteins to the Cb; they are necessary and sufficient to target both CsoS2 and foreign proteins to the Cb. The N-terminal repeats of this protein bind simultaneously to both subunits of RuBisCO. Probably also interacts with the major shell proteins (CsoS1); that interaction would increase the local concentration of CsoS2 so that it can condense RuBisCO and full carboxysomes can be formed. The sequence is that of Carboxysome assembly protein CsoS2 from Parasynechococcus marenigrum (strain WH8102).